Consider the following 393-residue polypeptide: Arginine--pyruvate transaminase AruH (393 aa).

At lysine 237 the chain carries N6-(pyridoxal phosphate)lysine.

The protein belongs to the class-I pyridoxal-phosphate-dependent aminotransferase family. As to quaternary structure, homodimer. Requires pyridoxal 5'-phosphate as cofactor.

It catalyses the reaction L-arginine + pyruvate = 5-guanidino-2-oxopentanoate + L-alanine. It participates in amino-acid degradation; L-arginine degradation. Its function is as follows. Catalyzes the conversion of L-arginine into 2-ketoarginine via transamination. L-arginine is the best substrate, but it can also use L-lysine, L-methionine, L-leucine, ornithine and L-glutamine, which indicates that it may have a broader physiological function in amino acid catabolism. The polypeptide is Arginine--pyruvate transaminase AruH (aruH) (Pseudomonas aeruginosa (strain ATCC 15692 / DSM 22644 / CIP 104116 / JCM 14847 / LMG 12228 / 1C / PRS 101 / PAO1)).